The primary structure comprises 183 residues: Gamma-crystallin N (183 aa).

Beta/gamma crystallin 'Greek key' domains lie at 6-46 (GKIT…RVES), 47-89 (GAWV…RPVG), 95-136 (FRID…KVYG), and 138-180 (GAWV…RRVL).

The protein belongs to the beta/gamma-crystallin family. Monomer. In terms of tissue distribution, primordially eye-specific. Present in lens nucleus. In the retina, expression in observed in the outer plexiform layer (containing photoreceptors axons and synapses) and photoreceptor outer segments (at protein level). Also detected in the auditory hindbrain where it is highly expressed in the medial nucleus of the trapezoid body, but also present in other nuclei of the superior olivary complex.

Functionally, crystallins are the dominant structural components of the vertebrate eye lens. Also plays an important role for integrity and function of auditory nuclei. In Mus musculus (Mouse), this protein is Gamma-crystallin N.